We begin with the raw amino-acid sequence, 741 residues long: 2-5A-dependent ribonuclease (741 aa).

The tract at residues 1-21 (MESRDHNNPQEGPTSSSGRRA) is disordered. Residues 9–18 (PQEGPTSSSG) are compositionally biased toward polar residues. ANK repeat units lie at residues 24–53 (EDNH…NVNF), 58–87 (GGWT…DPVL), 91–120 (NGAT…DVNE), 124–153 (YGFT…NVNL), 167–197 (GGAT…DVNA), 201–234 (MGRN…DVNV), 238–268 (RGKT…EIND), 272–301 (DGKT…STDC), and 303–329 (DLVM…KEDF). 2-5A binding (P-loop) regions lie at residues 229 to 242 (GADV…GKTP) and 253 to 275 (GLVQ…DGKT). The region spanning 365 to 586 (IDEKYKIADT…LSDLLGHPFF (222 aa)) is the Protein kinase domain. Residues 395 to 444 (CEGSPRAQREVSCLQSSRENSHLVTFYGSESHRGHLFVCVTLCEQTLEAC) form a C6-type; atypical zinc finger. The 135-residue stretch at 589 to 723 (WESRYRTLRN…KHFPQTHSPN (135 aa)) folds into the KEN domain. Residue Lys684 is modified to N6-acetyllysine. The interval 715–741 (HFPQTHSPNKPQCDGAGGASGLASPGC) is disordered.

It belongs to the protein kinase superfamily. Monomer (inactive form) or homodimer. Interacts with ABCE1; this interaction inhibits the RNASEL. Requires Mn(2+) as cofactor. It depends on Mg(2+) as a cofactor. Highly expressed in spleen and thymus followed by prostate, testis, uterus, small intestine, colon and peripheral blood leukocytes.

The protein localises to the cytoplasm. The protein resides in the mitochondrion. With respect to regulation, after binding to 2-5A (5'-phosphorylated 2',5'-linked oligoadenylates) the homodimerization and subsequent activation occurs. Inhibited by RNASEL inhibitor ABCE1/RLI, a cytoplasmic member of the ATP-binding cassette (ABC) transporter family. Endoribonuclease that functions in the interferon (IFN) antiviral response. In INF treated and virus infected cells, RNASEL probably mediates its antiviral effects through a combination of direct cleavage of single-stranded viral RNAs, inhibition of protein synthesis through the degradation of rRNA, induction of apoptosis, and induction of other antiviral genes. RNASEL mediated apoptosis is the result of a JNK-dependent stress-response pathway leading to cytochrome c release from mitochondria and caspase-dependent apoptosis. Therefore, activation of RNASEL could lead to elimination of virus infected cells under some circumstances. In the crosstalk between autophagy and apoptosis proposed to induce autophagy as an early stress response to small double-stranded RNA and at later stages of prolonged stress to activate caspase-dependent proteolytic cleavage of BECN1 to terminate autophagy and promote apoptosis. Might play a central role in the regulation of mRNA turnover. Cleaves 3' of UpNp dimers, with preference for UU and UA sequences, to sets of discrete products ranging from between 4 and 22 nucleotides in length. This chain is 2-5A-dependent ribonuclease (RNASEL), found in Homo sapiens (Human).